Here is a 116-residue protein sequence, read N- to C-terminus: Large ribosomal subunit protein uL18 (116 aa).

This sequence belongs to the universal ribosomal protein uL18 family. As to quaternary structure, part of the 50S ribosomal subunit; part of the 5S rRNA/L5/L18/L25 subcomplex. Contacts the 5S and 23S rRNAs.

Functionally, this is one of the proteins that bind and probably mediate the attachment of the 5S RNA into the large ribosomal subunit, where it forms part of the central protuberance. In Teredinibacter turnerae (strain ATCC 39867 / T7901), this protein is Large ribosomal subunit protein uL18.